A 213-amino-acid polypeptide reads, in one-letter code: Pyridoxine/pyridoxamine 5'-phosphate oxidase (213 aa).

Residues 9-12 (RKDY) and Lys-67 each bind substrate. FMN contacts are provided by residues 62–67 (RIVLLK), 77–78 (FT), Arg-83, Lys-84, and Gln-106. Residues Tyr-124, Arg-128, and Ser-132 each coordinate substrate. Residues 141–142 (QS) and Trp-186 each bind FMN. A substrate-binding site is contributed by 192–194 (RLH). An FMN-binding site is contributed by Arg-196.

Belongs to the pyridoxamine 5'-phosphate oxidase family. Homodimer. FMN is required as a cofactor.

The catalysed reaction is pyridoxamine 5'-phosphate + O2 + H2O = pyridoxal 5'-phosphate + H2O2 + NH4(+). It carries out the reaction pyridoxine 5'-phosphate + O2 = pyridoxal 5'-phosphate + H2O2. It functions in the pathway cofactor metabolism; pyridoxal 5'-phosphate salvage; pyridoxal 5'-phosphate from pyridoxamine 5'-phosphate: step 1/1. Its pathway is cofactor metabolism; pyridoxal 5'-phosphate salvage; pyridoxal 5'-phosphate from pyridoxine 5'-phosphate: step 1/1. Functionally, catalyzes the oxidation of either pyridoxine 5'-phosphate (PNP) or pyridoxamine 5'-phosphate (PMP) into pyridoxal 5'-phosphate (PLP). The polypeptide is Pyridoxine/pyridoxamine 5'-phosphate oxidase (Cyanothece sp. (strain PCC 7425 / ATCC 29141)).